The sequence spans 133 residues: MSNHDPISDMLTRIRNASQKKHTTTTIPGSKMSLSIAKVLQKEGFISDINEEGEGYKSQIILGLKYSGKNKFPTIRSMQRVSKPGLRIYKNTRGLPKVLGGLGVAIISTSKGVMSDRDARKQGIGGEVLCYVY.

The protein belongs to the universal ribosomal protein uS8 family. In terms of assembly, part of the 30S ribosomal subunit. Contacts proteins S5 and S12.

In terms of biological role, one of the primary rRNA binding proteins, it binds directly to 16S rRNA central domain where it helps coordinate assembly of the platform of the 30S subunit. The chain is Small ribosomal subunit protein uS8 from Prochlorococcus marinus (strain AS9601).